Reading from the N-terminus, the 305-residue chain is N-acyl-aromatic-L-amino acid amidohydrolase (carboxylate-forming) (305 aa).

The Zn(2+) site is built by His-15 and Glu-18. Substrate is bound by residues Arg-57 and 64–65; that span reads NR. His-108 lines the Zn(2+) pocket. Glu-171 and Tyr-281 together coordinate substrate.

It belongs to the AspA/AstE family. Aspartoacylase subfamily. In terms of assembly, homotetramer. Zn(2+) is required as a cofactor.

The protein resides in the apical cell membrane. The protein localises to the cytoplasm. It carries out the reaction an N-acyl-aromatic L-alpha-amino acid + H2O = an aromatic L-alpha-amino acid + a carboxylate. The catalysed reaction is an N-acetyl-L-cysteine-S-conjugate + H2O = an S-substituted L-cysteine + acetate. Functionally, plays an important role in deacetylating mercapturic acids in kidney proximal tubules. The sequence is that of N-acyl-aromatic-L-amino acid amidohydrolase (carboxylate-forming) (acy3) from Xenopus laevis (African clawed frog).